Consider the following 217-residue polypeptide: D-methionine transport system permease protein MetI (217 aa).

The ABC transmembrane type-1 domain occupies 13-204 (VWETLMMTFV…LLVILVYLIQ (192 aa)). The next 5 membrane-spanning stretches (helical) occupy residues 20–40 (TFVS…LLYV), 58–78 (GVVN…MIPF), 81–101 (MIVG…VGAA), 152–172 (ITLI…AGGL), and 186–206 (ATVM…IQLS).

This sequence belongs to the binding-protein-dependent transport system permease family. CysTW subfamily.

It is found in the cell inner membrane. Its function is as follows. Part of the binding-protein-dependent transport system for D-methionine and the toxic methionine analog alpha-methyl-methionine. Probably responsible for the translocation of the substrate across the membrane. In Yersinia pestis, this protein is D-methionine transport system permease protein MetI (metI).